Reading from the N-terminus, the 238-residue chain is MKVSLFATCLIDLFYTNAGKATVELLERLGCEIDFPEAQTCCGQPAYNSGYVKEAKEAMKHMIRTFEHADYVVTPSGSCATMLKEYPRVFQGDREWESKAKALADKTYELTQFIVDVLKMEDVGAKLQGRATYHTSCHMTRLLGVKEAPFKLLKNVKGLELVPLPNAYQCCGFGGTFSVKMGTISEQMVDEKIEHIEEVNADYLIGADCGCLMNIGGRLKRQGKPIKVMHIAEVLNSR.

The protein belongs to the LutA/YkgE family.

Is involved in L-lactate degradation and allows cells to grow with lactate as the sole carbon source. This Geobacillus sp. (strain WCH70) protein is Lactate utilization protein A.